Consider the following 635-residue polypeptide: Ligand-gated ion channel 4 (635 aa).

The signal sequence occupies residues 1 to 24; the sequence is MIICYSCLTVSILLTIKFVPCRFA. The Extracellular portion of the chain corresponds to 25-324; it reads GIEHQNTKSR…IHMHRRPLFY (300 aa). Asparagine 46, asparagine 139, asparagine 177, and asparagine 225 each carry an N-linked (GlcNAc...) asparagine glycan. Residues cysteine 238 and cysteine 252 are joined by a disulfide bond. Asparagine 282 is a glycosylation site (N-linked (GlcNAc...) asparagine). Transmembrane regions (helical) follow at residues 325–345, 355–375, and 381–401; these read VFNH…GFLM, MIIT…ESIP, and VPLI…ATCV. The Cytoplasmic segment spans residues 402–599; it reads NVITLNMHRN…QQLASVVDRL (198 aa). Residues 600-620 traverse the membrane as a helical segment; that stretch reads LLCLFCTATLFTIICLLIVPV. The N-linked (GlcNAc...) asparagine glycan is linked to asparagine 625.

Belongs to the ligand-gated ion channel (TC 1.A.9) family.

It is found in the postsynaptic cell membrane. The protein resides in the cell membrane. Its function is as follows. Possible acetylcholine receptor. This Caenorhabditis elegans protein is Ligand-gated ion channel 4 (lgc-4).